The primary structure comprises 86 residues: Large ribosomal subunit protein eL43 (86 aa).

Residues Cys-38, Cys-41, Cys-57, and Cys-60 each coordinate Zn(2+). The segment at 38–60 (CPFCGSTGTVRRVSVGVWSCRKC) adopts a C4-type zinc-finger fold.

It belongs to the eukaryotic ribosomal protein eL43 family. Putative zinc-binding subfamily. As to quaternary structure, part of the 50S ribosomal subunit. Requires Zn(2+) as cofactor.

In terms of biological role, binds to the 23S rRNA. The chain is Large ribosomal subunit protein eL43 from Aeropyrum pernix (strain ATCC 700893 / DSM 11879 / JCM 9820 / NBRC 100138 / K1).